A 217-amino-acid chain; its full sequence is Oxygen-insensitive NAD(P)H nitroreductase (217 aa).

Residue 10-14 (RHSTK) coordinates FMN. Positions 14, 41, 67, 71, 74, and 107 each coordinate NAD(+). Asn-71 is a binding site for FMN. FMN is bound by residues 165-166 (EG) and 205-207 (KSR).

This sequence belongs to the nitroreductase family. In terms of assembly, homodimer. The cofactor is FMN.

Functionally, reduction of a variety of nitroaromatic compounds using NADH (and to lesser extent NADPH) as source of reducing equivalents; two electrons are transferred. This chain is Oxygen-insensitive NAD(P)H nitroreductase, found in Enterobacter cloacae.